The sequence spans 359 residues: Membrane-bound lytic murein transglycosylase C (359 aa).

Residues M1–S16 form the signal peptide. C17 carries N-palmitoyl cysteine lipidation. C17 is lipidated: S-diacylglycerol cysteine.

It belongs to the transglycosylase Slt family.

It localises to the cell outer membrane. It carries out the reaction Exolytic cleavage of the (1-&gt;4)-beta-glycosidic linkage between N-acetylmuramic acid (MurNAc) and N-acetylglucosamine (GlcNAc) residues in peptidoglycan, from either the reducing or the non-reducing ends of the peptidoglycan chains, with concomitant formation of a 1,6-anhydrobond in the MurNAc residue.. Functionally, murein-degrading enzyme. May play a role in recycling of muropeptides during cell elongation and/or cell division. The sequence is that of Membrane-bound lytic murein transglycosylase C from Escherichia coli O8 (strain IAI1).